The primary structure comprises 160 residues: Peptidyl-prolyl cis-trans isomerase CYP18-1 (160 aa).

The 151-residue stretch at 3-153 (VTLHTNLGDI…AEIRLNRVTI (151 aa)) folds into the PPIase cyclophilin-type domain.

The protein belongs to the cyclophilin-type PPIase family. In terms of tissue distribution, ubiquitous.

Its subcellular location is the cytoplasm. The enzyme catalyses [protein]-peptidylproline (omega=180) = [protein]-peptidylproline (omega=0). Its function is as follows. PPIases accelerate the folding of proteins. It catalyzes the cis-trans isomerization of proline imidic peptide bonds in oligopeptides. This Arabidopsis thaliana (Mouse-ear cress) protein is Peptidyl-prolyl cis-trans isomerase CYP18-1 (CYP18-1).